The following is a 701-amino-acid chain: Aryl hydrocarbon receptor repressor (701 aa).

Residues 25 to 78 (TMGAEKSNPSKRHRDRLNTELDHLASLLPFSPDIISKLDKLSVLRLSVSYLRVK) enclose the bHLH domain. The PAS domain maps to 106–176 (PVQEGRLLLE…RQLHWAMDPP (71 aa)). A compositionally biased stretch (polar residues) spans 409–430 (TEQRSQESTTKLTRQPSKNEPS). The tract at residues 409-432 (TEQRSQESTTKLTRQPSKNEPSTC) is disordered. The segment at 555–701 (ASTTSCLWLG…SKGSDGIFLP (147 aa)) is needed for transcriptional repression. Glycyl lysine isopeptide (Lys-Gly) (interchain with G-Cter in SUMO2) cross-links involve residues lysine 583 and lysine 660.

Interacts with ARNT, ANKRA2, HDAC4 and HDAC5. Interacts with ARNT; forms a heterodimer with ARNT.

It is found in the cytoplasm. The protein localises to the nucleus. Its function is as follows. Mediates dioxin toxicity and is involved in regulation of cell growth and differentiation. Represses the transcription activity of AHR by competing with this transcription factor for heterodimer formation with the ARNT and subsequently binding to the xenobiotic response element (XRE) sequence present in the promoter regulatory region of variety of genes. Represses CYP1A1 by binding the XRE sequence and recruiting ANKRA2, HDAC4 and/or HDAC5. Autoregulates its expression by associating with its own XRE site. The chain is Aryl hydrocarbon receptor repressor (Ahrr) from Mus musculus (Mouse).